The primary structure comprises 151 residues: Chaperonin GroEL (151 aa).

Residue 41-45 (DGTTT) coordinates ATP.

It belongs to the chaperonin (HSP60) family. In terms of assembly, forms a cylinder of 14 subunits composed of two heptameric rings stacked back-to-back. Interacts with the co-chaperonin GroES.

The protein resides in the cytoplasm. It catalyses the reaction ATP + H2O + a folded polypeptide = ADP + phosphate + an unfolded polypeptide.. Its function is as follows. Together with its co-chaperonin GroES, plays an essential role in assisting protein folding. The GroEL-GroES system forms a nano-cage that allows encapsulation of the non-native substrate proteins and provides a physical environment optimized to promote and accelerate protein folding. The protein is Chaperonin GroEL of Mycolicibacterium fortuitum (Mycobacterium fortuitum).